A 390-amino-acid chain; its full sequence is Cystathionine beta-lyase MetC (390 aa).

An N6-(pyridoxal phosphate)lysine modification is found at Lys-200.

The protein belongs to the trans-sulfuration enzymes family. As to quaternary structure, homotetramer. The cofactor is pyridoxal 5'-phosphate.

The protein resides in the cytoplasm. It catalyses the reaction L,L-cystathionine + H2O = L-homocysteine + pyruvate + NH4(+). It carries out the reaction an S-substituted L-cysteine + H2O = a thiol + pyruvate + NH4(+). The protein operates within amino-acid biosynthesis; L-methionine biosynthesis via de novo pathway; L-homocysteine from L-cystathionine: step 1/1. Functionally, catalyzes the transformation of cystathionine into homocysteine. Also exhibits cysteine desulfhydrase activity in vitro, producing sulfide from cysteine. This is Cystathionine beta-lyase MetC (metC) from Bacillus subtilis (strain 168).